The following is a 216-amino-acid chain: MKLKYVKALVAVTVALGVLLPSTISHAKSFSGRSSSSYSSRSSSSSYSGSYKSSPKSSYSSGSSSSSKKSKTSDDSSSSISLKKKPSEKASSSSSKKSSGTFSGATSKVTGKTYSGKTSKAYVGGRYVSVNHYYHAGFAPSGWFGYYSGFTMGMFMISMMHPWGYTYHPVGGPGYVSYGASPIAWIVDIIALIIILIIVIALIRAFKAPKTYRRRF.

A helical transmembrane segment spans residues 5–25 (YVKALVAVTVALGVLLPSTIS). 2 stretches are compositionally biased toward low complexity: residues 28 to 67 (KSFSGRSSSSYSSRSSSSSYSGSYKSSPKSSYSSGSSSSS) and 89 to 108 (KASSSSSKKSSGTFSGATSK). The disordered stretch occupies residues 28–115 (KSFSGRSSSS…TSKVTGKTYS (88 aa)). 2 helical membrane passes run 137–157 (GFAPSGWFGYYSGFTMGMFMI) and 183–203 (IAWIVDIIALIIILIIVIALI).

The protein resides in the cell membrane. This is an uncharacterized protein from Bacillus subtilis (strain 168).